Reading from the N-terminus, the 297-residue chain is Tyrosine recombinase XerD (297 aa).

The 86-residue stretch at 1–86 (MNDLIEDFLH…SLRSFFHYLM (86 aa)) folds into the Core-binding (CB) domain. One can recognise a Tyr recombinase domain in the interval 107–291 (GLPKVLNLDD…TKLRLKDVYK (185 aa)). Catalysis depends on residues R147, K171, H243, R246, and H269. Y278 functions as the O-(3'-phospho-DNA)-tyrosine intermediate in the catalytic mechanism.

It belongs to the 'phage' integrase family. XerD subfamily. In terms of assembly, forms a cyclic heterotetrameric complex composed of two molecules of XerC and two molecules of XerD.

The protein resides in the cytoplasm. Functionally, site-specific tyrosine recombinase, which acts by catalyzing the cutting and rejoining of the recombining DNA molecules. The XerC-XerD complex is essential to convert dimers of the bacterial chromosome into monomers to permit their segregation at cell division. It also contributes to the segregational stability of plasmids. This Listeria monocytogenes serotype 4b (strain F2365) protein is Tyrosine recombinase XerD.